Reading from the N-terminus, the 125-residue chain is MLEKLGFIALAGAAGTLARYWLSGLVYDVLGRDFPWGTAVVNILGCFLFGLVWEAGAERMLLRTEARAVLLTGFMGAFTTFSTFIFESGGLLEDHRYLALLANLGFQTILGFAALFAGLALGRLI.

The next 4 membrane-spanning stretches (helical) occupy residues 6–26, 34–54, 68–88, and 98–118; these read GFIA…SGLV, FPWG…LVWE, AVLL…IFES, and LALL…LFAG. Gly-76 and Thr-79 together coordinate Na(+).

This sequence belongs to the fluoride channel Fluc/FEX (TC 1.A.43) family.

The protein resides in the cell inner membrane. It carries out the reaction fluoride(in) = fluoride(out). Its activity is regulated as follows. Na(+) is not transported, but it plays an essential structural role and its presence is essential for fluoride channel function. Its function is as follows. Fluoride-specific ion channel. Important for reducing fluoride concentration in the cell, thus reducing its toxicity. This chain is Fluoride-specific ion channel FluC, found in Solidesulfovibrio magneticus (strain ATCC 700980 / DSM 13731 / RS-1) (Desulfovibrio magneticus).